We begin with the raw amino-acid sequence, 641 residues long: Serine/threonine-protein kinase PK-1 (641 aa).

Positions 18–280 (YRVDARIAVG…ARARDARARL (263 aa)) constitute a Protein kinase domain. Residues 24 to 32 (IAVGGMATV) and Lys47 each bind ATP. Asp141 (proton acceptor) is an active-site residue. Residues 317 to 347 (LPVNEEDEGADAAHRTSRFRSPPPLPPRGRT) form a disordered region. PASTA domains follow at residues 375–441 (SGQF…TLSK), 442–508 (GPRT…LTVS), 509–576 (KGAP…TLSK), and 577–641 (GPEM…IEIR). The tract at residues 469–494 (KPGMSTREFSDSVPAGSVISTEPGKG) is disordered.

The protein belongs to the protein kinase superfamily. Ser/Thr protein kinase family. Autophosphorylated on threonine residue(s).

The catalysed reaction is L-seryl-[protein] + ATP = O-phospho-L-seryl-[protein] + ADP + H(+). It carries out the reaction L-threonyl-[protein] + ATP = O-phospho-L-threonyl-[protein] + ADP + H(+). The polypeptide is Serine/threonine-protein kinase PK-1 (spk1) (Streptomyces toyocaensis).